The sequence spans 372 residues: UDP-N-acetylglucosamine--N-acetylmuramyl-(pentapeptide) pyrophosphoryl-undecaprenol N-acetylglucosamine transferase (372 aa).

UDP-N-acetyl-alpha-D-glucosamine is bound by residues 21–23, N135, R172, S206, and Q303; that span reads TAG.

The protein belongs to the glycosyltransferase 28 family. MurG subfamily.

The protein localises to the cell membrane. It carries out the reaction di-trans,octa-cis-undecaprenyl diphospho-N-acetyl-alpha-D-muramoyl-L-alanyl-D-glutamyl-meso-2,6-diaminopimeloyl-D-alanyl-D-alanine + UDP-N-acetyl-alpha-D-glucosamine = di-trans,octa-cis-undecaprenyl diphospho-[N-acetyl-alpha-D-glucosaminyl-(1-&gt;4)]-N-acetyl-alpha-D-muramoyl-L-alanyl-D-glutamyl-meso-2,6-diaminopimeloyl-D-alanyl-D-alanine + UDP + H(+). The protein operates within cell wall biogenesis; peptidoglycan biosynthesis. Its function is as follows. Cell wall formation. Catalyzes the transfer of a GlcNAc subunit on undecaprenyl-pyrophosphoryl-MurNAc-pentapeptide (lipid intermediate I) to form undecaprenyl-pyrophosphoryl-MurNAc-(pentapeptide)GlcNAc (lipid intermediate II). The chain is UDP-N-acetylglucosamine--N-acetylmuramyl-(pentapeptide) pyrophosphoryl-undecaprenol N-acetylglucosamine transferase from Paenarthrobacter aurescens (strain TC1).